We begin with the raw amino-acid sequence, 89 residues long: Large ribosomal subunit protein bL27 (89 aa).

A disordered region spans residues 1-21; that stretch reads MAHKKAGGSSRNGRDSKGKRL.

The protein belongs to the bacterial ribosomal protein bL27 family.

The sequence is that of Large ribosomal subunit protein bL27 from Bradyrhizobium diazoefficiens (strain JCM 10833 / BCRC 13528 / IAM 13628 / NBRC 14792 / USDA 110).